The chain runs to 129 residues: KVYGRCELAAAMKRLGLDNYRGYSLGNWVCAAKFESNFNTHATNRNTDGSTDYGILQINSRWWCNDGRTPGSRNLCNIPCSALLSSDITASVNCAKKIVSDRNGMNAWVAWRNRCKGTDVHAWIRGCRL.

A C-type lysozyme domain is found at 1–129 (KVYGRCELAA…VHAWIRGCRL (129 aa)). 4 disulfides stabilise this stretch: Cys-6-Cys-127, Cys-30-Cys-115, Cys-64-Cys-80, and Cys-76-Cys-94. Catalysis depends on residues Glu-35 and Asp-52.

This sequence belongs to the glycosyl hydrolase 22 family. In terms of assembly, monomer.

The protein localises to the secreted. It carries out the reaction Hydrolysis of (1-&gt;4)-beta-linkages between N-acetylmuramic acid and N-acetyl-D-glucosamine residues in a peptidoglycan and between N-acetyl-D-glucosamine residues in chitodextrins.. In terms of biological role, lysozymes have primarily a bacteriolytic function; those in tissues and body fluids are associated with the monocyte-macrophage system and enhance the activity of immunoagents. In Pavo cristatus (Indian peafowl), this protein is Lysozyme C (LYZ).